The following is a 1210-amino-acid chain: uncharacterized protein (1210 aa).

It to E.coli molybdate metabolism regulator (MolR).

This is an uncharacterized protein from Escherichia coli (strain K12).